The primary structure comprises 545 residues: CTP synthase (545 aa).

Residues 1 to 266 (MKTKFIFITG…DQKIAIMLKL (266 aa)) form an amidoligase domain region. Serine 14 serves as a coordination point for CTP. Position 14 (serine 14) interacts with UTP. ATP contacts are provided by residues 15 to 20 (SLGKGL) and aspartate 72. Residues aspartate 72 and glutamate 140 each contribute to the Mg(2+) site. CTP contacts are provided by residues 147 to 149 (DIE), 187 to 192 (KTKPTQ), and lysine 223. UTP-binding positions include 187-192 (KTKPTQ) and lysine 223. The region spanning 291–545 (TIGIVGKYVD…IKASCENKNK (255 aa)) is the Glutamine amidotransferase type-1 domain. Glycine 353 contacts L-glutamine. The active-site Nucleophile; for glutamine hydrolysis is cysteine 380. Residues 381–384 (LGMQ), glutamate 404, and arginine 472 contribute to the L-glutamine site. Residues histidine 518 and glutamate 520 contribute to the active site.

It belongs to the CTP synthase family. Homotetramer.

It carries out the reaction UTP + L-glutamine + ATP + H2O = CTP + L-glutamate + ADP + phosphate + 2 H(+). It catalyses the reaction L-glutamine + H2O = L-glutamate + NH4(+). The catalysed reaction is UTP + NH4(+) + ATP = CTP + ADP + phosphate + 2 H(+). The protein operates within pyrimidine metabolism; CTP biosynthesis via de novo pathway; CTP from UDP: step 2/2. With respect to regulation, allosterically activated by GTP, when glutamine is the substrate; GTP has no effect on the reaction when ammonia is the substrate. The allosteric effector GTP functions by stabilizing the protein conformation that binds the tetrahedral intermediate(s) formed during glutamine hydrolysis. Inhibited by the product CTP, via allosteric rather than competitive inhibition. Catalyzes the ATP-dependent amination of UTP to CTP with either L-glutamine or ammonia as the source of nitrogen. Regulates intracellular CTP levels through interactions with the four ribonucleotide triphosphates. In Maridesulfovibrio salexigens (strain ATCC 14822 / DSM 2638 / NCIMB 8403 / VKM B-1763) (Desulfovibrio salexigens), this protein is CTP synthase.